A 445-amino-acid polypeptide reads, in one-letter code: Maltoporin (445 aa).

Positions 1 to 25 (MKMKAKWLPIAAGVTAALASQAAFA) are cleaved as a signal peptide.

It belongs to the porin LamB (TC 1.B.3) family. As to quaternary structure, homotrimer formed of three 18-stranded antiparallel beta-barrels, containing three independent channels.

The protein resides in the cell outer membrane. It carries out the reaction beta-maltose(in) = beta-maltose(out). In terms of biological role, involved in the transport of maltose and maltodextrins. This chain is Maltoporin, found in Aeromonas salmonicida.